The primary structure comprises 705 residues: Probable cyclic nucleotide-gated ion channel 16 (705 aa).

Residues 1–57 lie on the Cytoplasmic side of the membrane; sequence MSNLHLYTSARFRNFPTTFSLRHHHNDPNNQRRRSIFSKLRDKTLDPGGDLITRWNH. The chain crosses the membrane as a helical span at residues 58 to 78; the sequence is IFLITCLLALFLDPLYFYLPI. At 79–91 the chain is on the extracellular side; the sequence is VQAGTACMSIDVR. The helical transmembrane segment at 92 to 112 threads the bilayer; it reads FGIFVTCFRNLADLSFLIHIL. The Cytoplasmic portion of the chain corresponds to 113–147; it reads LKFKTAFVSKSSRVFGRGELVMDRREIAIRYLKSE. A helical transmembrane segment spans residues 148–168; it reads FVIDLAATLPLPQIMIWFVIP. At 169–180 the chain is on the extracellular side; that stretch reads NAGEFRYAAHQN. Residues 181-201 traverse the membrane as a helical segment; sequence HTLSLIVLIQYVPRFLVMLPL. The Cytoplasmic segment spans residues 202-222; it reads NRRIIKATGVAAKTAWSGAAY. The helical transmembrane segment at 223–243 threads the bilayer; it reads NLILYLLVSHVLGSVWYVLSI. Residues 244–353 lie on the Extracellular side of the membrane; the sequence is QRQHECWRRE…LAASTLSSET (110 aa). A helical membrane pass occupies residues 354 to 374; it reads IFSCFICVAGLVFFSHLIGNV. Residues 375–705 are Cytoplasmic-facing; that stretch reads QNYLQSTTAR…MFKPEDPGFF (331 aa). A nucleoside 3',5'-cyclic phosphate contacts are provided by residues 457-580 and Glu528; that span reads FFAQ…HSKK. The segment at 573–588 is calmodulin-binding; sequence FRRLHSKKLQHAFRYY. Residues 593–622 form the IQ domain; that stretch reads RAWGTCFIQAAWRRYMKRKLAMELARQEEE. Disordered stretches follow at residues 636 to 655 and 672 to 705; these read EEDM…SNNQ and RGVL…PGFF. Over residues 642–655 the composition is skewed to low complexity; it reads SNNNNGDENSSNNQ.

The protein belongs to the cyclic nucleotide-gated cation channel (TC 1.A.1.5) family. Homotetramer or heterotetramer.

It localises to the cell membrane. Putative cyclic nucleotide-gated ion channel. The protein is Probable cyclic nucleotide-gated ion channel 16 (CNGC16) of Arabidopsis thaliana (Mouse-ear cress).